Reading from the N-terminus, the 340-residue chain is Ferrochelatase (340 aa).

The Fe cation site is built by His189 and Glu292.

This sequence belongs to the ferrochelatase family.

The protein localises to the cytoplasm. It catalyses the reaction heme b + 2 H(+) = protoporphyrin IX + Fe(2+). Its pathway is porphyrin-containing compound metabolism; protoheme biosynthesis; protoheme from protoporphyrin-IX: step 1/1. Functionally, catalyzes the ferrous insertion into protoporphyrin IX. In Ectopseudomonas mendocina (strain ymp) (Pseudomonas mendocina), this protein is Ferrochelatase.